The following is an 88-amino-acid chain: Elongation factor 1-beta (88 aa).

Belongs to the EF-1-beta/EF-1-delta family.

Functionally, promotes the exchange of GDP for GTP in EF-1-alpha/GDP, thus allowing the regeneration of EF-1-alpha/GTP that could then be used to form the ternary complex EF-1-alpha/GTP/AAtRNA. This is Elongation factor 1-beta from Halobacterium salinarum (strain ATCC 29341 / DSM 671 / R1).